We begin with the raw amino-acid sequence, 417 residues long: NADH-quinone oxidoreductase subunit D (417 aa).

The protein belongs to the complex I 49 kDa subunit family. In terms of assembly, NDH-1 is composed of 14 different subunits. Subunits NuoB, C, D, E, F, and G constitute the peripheral sector of the complex.

It is found in the cell inner membrane. It catalyses the reaction a quinone + NADH + 5 H(+)(in) = a quinol + NAD(+) + 4 H(+)(out). Its function is as follows. NDH-1 shuttles electrons from NADH, via FMN and iron-sulfur (Fe-S) centers, to quinones in the respiratory chain. The immediate electron acceptor for the enzyme in this species is believed to be ubiquinone. Couples the redox reaction to proton translocation (for every two electrons transferred, four hydrogen ions are translocated across the cytoplasmic membrane), and thus conserves the redox energy in a proton gradient. In Janthinobacterium sp. (strain Marseille) (Minibacterium massiliensis), this protein is NADH-quinone oxidoreductase subunit D.